Reading from the N-terminus, the 321-residue chain is Glucokinase (321 aa).

Residue 8 to 13 (GDVGGT) coordinates ATP.

It belongs to the bacterial glucokinase family.

Its subcellular location is the cytoplasm. The enzyme catalyses D-glucose + ATP = D-glucose 6-phosphate + ADP + H(+). In Shigella sonnei (strain Ss046), this protein is Glucokinase.